Consider the following 351-residue polypeptide: Photosystem II D2 protein (351 aa).

A helical membrane pass occupies residues 39–59; that stretch reads TAYLAIGGWLTGTTFVTSWYT. H116 serves as a coordination point for chlorophyll a. A helical transmembrane segment spans residues 123 to 139; it reads GFMLRQFEIARLVGIRP. Q128 and N141 together coordinate pheophytin a. The chain crosses the membrane as a helical span at residues 151–164; sequence VFVSVFLMYPLGQS. Chlorophyll a is bound at residue H196. A helical membrane pass occupies residues 206–226; it reads GALLCAIHGATVENTLFEDGE. Residues H213 and F260 each coordinate a plastoquinone. Residue H213 coordinates Fe cation. Residue H267 coordinates Fe cation. The helical transmembrane segment at 277–293 threads the bilayer; that stretch reads GLWTSSIGIIGLALNLR.

The protein belongs to the reaction center PufL/M/PsbA/D family. PSII is composed of 1 copy each of membrane proteins PsbA, PsbB, PsbC, PsbD, PsbE, PsbF, PsbH, PsbI, PsbJ, PsbK, PsbL, PsbM, PsbT, PsbX, PsbY, PsbZ, Psb30/Ycf12, peripheral proteins PsbO, CyanoQ (PsbQ), PsbU, PsbV and a large number of cofactors. It forms dimeric complexes. The cofactor is The D1/D2 heterodimer binds P680, chlorophylls that are the primary electron donor of PSII, and subsequent electron acceptors. It shares a non-heme iron and each subunit binds pheophytin, quinone, additional chlorophylls, carotenoids and lipids. There is also a Cl(-1) ion associated with D1 and D2, which is required for oxygen evolution. The PSII complex binds additional chlorophylls, carotenoids and specific lipids..

Its subcellular location is the cellular thylakoid membrane. The enzyme catalyses 2 a plastoquinone + 4 hnu + 2 H2O = 2 a plastoquinol + O2. Its function is as follows. Photosystem II (PSII) is a light-driven water:plastoquinone oxidoreductase that uses light energy to abstract electrons from H(2)O, generating O(2) and a proton gradient subsequently used for ATP formation. It consists of a core antenna complex that captures photons, and an electron transfer chain that converts photonic excitation into a charge separation. The D1/D2 (PsbA/PsbD) reaction center heterodimer binds P680, the primary electron donor of PSII as well as several subsequent electron acceptors. D2 is needed for assembly of a stable PSII complex. The sequence is that of Photosystem II D2 protein from Parasynechococcus marenigrum (strain WH8102).